The sequence spans 108 residues: MTKNTRFSPEVRQRAVRMVLESQGEYDSQWATICSIAPKIGCTPETLRVRVRQHERDTGGGDGGLTTAERQRLKELERENRELRRSNDILRQASAYFAKAEFDRLWKK.

It belongs to the transposase 8 family.

The chain is Insertion element IS629 uncharacterized 12 kDa protein S4062 from Shigella flexneri.